The sequence spans 106 residues: ATP-dependent Clp protease adapter protein ClpS (106 aa).

This sequence belongs to the ClpS family. Binds to the N-terminal domain of the chaperone ClpA.

Functionally, involved in the modulation of the specificity of the ClpAP-mediated ATP-dependent protein degradation. The sequence is that of ATP-dependent Clp protease adapter protein ClpS from Erwinia tasmaniensis (strain DSM 17950 / CFBP 7177 / CIP 109463 / NCPPB 4357 / Et1/99).